A 58-amino-acid polypeptide reads, in one-letter code: Photosystem II reaction center protein K (58 aa).

Residues 1-21 constitute a propeptide that is removed on maturation; that stretch reads MFDLYLKNLLDLSDSGTVVLA. A helical transmembrane segment spans residues 29–49; that stretch reads IFDPIVDVLPVIPVFFLLLAF.

This sequence belongs to the PsbK family. In terms of assembly, PSII is composed of 1 copy each of membrane proteins PsbA, PsbB, PsbC, PsbD, PsbE, PsbF, PsbH, PsbI, PsbJ, PsbK, PsbL, PsbM, PsbT, PsbX, PsbY, PsbZ, Psb30/Ycf12, at least 3 peripheral proteins of the oxygen-evolving complex and a large number of cofactors. It forms dimeric complexes.

The protein localises to the plastid. The protein resides in the chloroplast thylakoid membrane. In terms of biological role, one of the components of the core complex of photosystem II (PSII). PSII is a light-driven water:plastoquinone oxidoreductase that uses light energy to abstract electrons from H(2)O, generating O(2) and a proton gradient subsequently used for ATP formation. It consists of a core antenna complex that captures photons, and an electron transfer chain that converts photonic excitation into a charge separation. This is Photosystem II reaction center protein K from Zygnema circumcarinatum (Green alga).